The sequence spans 351 residues: Protein-glutamate methylesterase/protein-glutamine glutaminase 2 (351 aa).

The 118-residue stretch at 4-121 (KVLVVDDSTL…PQGFNEYQDL (118 aa)) folds into the Response regulatory domain. D55 is subject to 4-aspartylphosphate. A CheB-type methylesterase domain is found at 156-348 (RTVNTQLVAI…DKLLQYLASV (193 aa)). Residues S168, H194, and D290 contribute to the active site.

Belongs to the CheB family. Post-translationally, phosphorylated by CheA. Phosphorylation of the N-terminal regulatory domain activates the methylesterase activity.

Its subcellular location is the cytoplasm. The enzyme catalyses [protein]-L-glutamate 5-O-methyl ester + H2O = L-glutamyl-[protein] + methanol + H(+). It catalyses the reaction L-glutaminyl-[protein] + H2O = L-glutamyl-[protein] + NH4(+). Involved in chemotaxis. Part of a chemotaxis signal transduction system that modulates chemotaxis in response to various stimuli. Catalyzes the demethylation of specific methylglutamate residues introduced into the chemoreceptors (methyl-accepting chemotaxis proteins or MCP) by CheR. Also mediates the irreversible deamidation of specific glutamine residues to glutamic acid. This chain is Protein-glutamate methylesterase/protein-glutamine glutaminase 2, found in Shewanella oneidensis (strain ATCC 700550 / JCM 31522 / CIP 106686 / LMG 19005 / NCIMB 14063 / MR-1).